The following is a 137-amino-acid chain: Succinate dehydrogenase cytochrome b560 subunit (137 aa).

2 consecutive transmembrane segments (helical) span residues 31-51 (AFLA…DLSL) and 60-80 (FFFL…FTLL). His-85 provides a ligand contact to heme. The chain crosses the membrane as a helical span at residues 106–126 (VYTSGIIMLFCAAFLALLNII).

The protein belongs to the cytochrome b560 family. Forms part of complex II containing four subunits: a 70 kDa flavoprotein (FP), a 27 kDa iron-sulfur protein (IP), a cytochrome B and a membrane-anchoring protein. Requires heme as cofactor.

It is found in the mitochondrion inner membrane. It functions in the pathway carbohydrate metabolism; tricarboxylic acid cycle. Its function is as follows. Membrane-anchoring subunit of succinate dehydrogenase (SDH) that is involved in complex II of the mitochondrial electron transport chain and is responsible for transferring electrons from succinate to ubiquinone (coenzyme Q). This chain is Succinate dehydrogenase cytochrome b560 subunit (SDH3), found in Marchantia polymorpha (Common liverwort).